The following is a 123-amino-acid chain: Large ribosomal subunit protein uL14 (123 aa).

It belongs to the universal ribosomal protein uL14 family. Part of the 50S ribosomal subunit. Forms a cluster with proteins L3 and L19. In the 70S ribosome, L14 and L19 interact and together make contacts with the 16S rRNA in bridges B5 and B8.

Binds to 23S rRNA. Forms part of two intersubunit bridges in the 70S ribosome. This is Large ribosomal subunit protein uL14 from Photorhabdus laumondii subsp. laumondii (strain DSM 15139 / CIP 105565 / TT01) (Photorhabdus luminescens subsp. laumondii).